The chain runs to 473 residues: Glutamate--tRNA ligase (473 aa).

The 'HIGH' region signature appears at P11 to G21. The 'KMSKS' region motif lies at K240–R244. Residue K243 coordinates ATP.

It belongs to the class-I aminoacyl-tRNA synthetase family. Glutamate--tRNA ligase type 1 subfamily. In terms of assembly, monomer.

It is found in the cytoplasm. It catalyses the reaction tRNA(Glu) + L-glutamate + ATP = L-glutamyl-tRNA(Glu) + AMP + diphosphate. Its function is as follows. Catalyzes the attachment of glutamate to tRNA(Glu) in a two-step reaction: glutamate is first activated by ATP to form Glu-AMP and then transferred to the acceptor end of tRNA(Glu). This chain is Glutamate--tRNA ligase, found in Rhodopseudomonas palustris (strain HaA2).